The sequence spans 462 residues: Putative endoglucanase type B (462 aa).

Positions 1–16 (MAYKLILAAFAATALA) are cleaved as a signal peptide. One can recognise a CBM1 domain in the interval 25-61 (CSNGVWAQCGGQNWSGTPCCTSGNKCVKLNDFYSQCQ). 2 cysteine pairs are disulfide-bonded: Cys-33/Cys-50 and Cys-44/Cys-60. Asn-37 carries N-linked (GlcNAc...) asparagine glycosylation. Residues 64-100 (SAEPSSTAAGPSSTTATKTTATGGSSTTAGGSVTSAP) are compositionally biased toward low complexity. The interval 64–102 (SAEPSSTAAGPSSTTATKTTATGGSSTTAGGSVTSAPPA) is disordered. A linker region spans residues 66-99 (EPSSTAAGPSSTTATKTTATGGSSTTAGGSVTSA). Residues 100 to 462 (PPAASDNPYA…LLDNANPSFL (363 aa)) are catalytic. Residue Asp-190 is part of the active site. Cys-191 and Cys-250 are disulfide-bonded. N-linked (GlcNAc...) asparagine glycosylation occurs at Asn-223. Asp-236 acts as the Proton donor in catalysis. 2 N-linked (GlcNAc...) asparagine glycosylation sites follow: Asn-272 and Asn-317. A disulfide bridge links Cys-383 with Cys-430. Residue Asp-416 is the Nucleophile of the active site.

This sequence belongs to the glycosyl hydrolase 6 (cellulase B) family.

The enzyme catalyses Endohydrolysis of (1-&gt;4)-beta-D-glucosidic linkages in cellulose, lichenin and cereal beta-D-glucans.. The protein is Putative endoglucanase type B of Fusarium oxysporum (Fusarium vascular wilt).